A 1726-amino-acid polypeptide reads, in one-letter code: Probable serine/threonine-protein kinase roco4 (1726 aa).

LRR repeat units lie at residues 256–277, 280–301, 303–324, and 326–347; these read KGKR…ITQM, HLVE…IQLL, SLRI…ICYL, and DLKI…VVQS. In terms of domain architecture, Roc spans 364 to 544; sequence KSETWNKVKL…KRLIHEAEKS (181 aa). GTP-binding positions include 377 to 384, 428 to 432, and 487 to 490; these read GQEGVGKT, DFGGQ, and THSD. The COR domain occupies 591-787; it reads AINSQKERYI…RTYWRNGVLL (197 aa). Residues 800-881 show a composition bias toward low complexity; sequence SKQQQLQQQQ…STLNSQQLIN (82 aa). Residues 800–890 are disordered; the sequence is SKQQQLQQQQ…NPSVSPLSST (91 aa). The region spanning 1026-1292 is the Protein kinase domain; the sequence is IEYEKQIGKG…SYIVKELSEL (267 aa). Residues 1032–1040 and lysine 1055 each bind ATP; that span reads IGKGGFGLV. Residue aspartate 1154 is the Proton acceptor of the active site. Over residues 1319–1331 the composition is skewed to polar residues; sequence ASTSSNADDGSQT. Residues 1319–1385 form a disordered region; the sequence is ASTSSNADDG…SSPSTSFINS (67 aa). Positions 1332 to 1348 are enriched in low complexity; sequence NNNNNNNNNNNNNNNNN. The segment covering 1349-1364 has biased composition (polar residues); the sequence is SGSSIALSPSRSFEQQ. Low complexity predominate over residues 1365-1381; that stretch reads TTTTTTTTTSPSSPSTS. 6 WD repeats span residues 1422–1461, 1463–1502, 1506–1546, 1589–1627, 1633–1670, and 1674–1714; these read SVHK…LINE, KCPH…IVQQ, PHKG…KKHS, KHST…ELQK, AHHE…KPFT, and HHKQ…EKKT.

It belongs to the protein kinase superfamily. TKL Ser/Thr protein kinase family. ROCO subfamily.

The enzyme catalyses L-seryl-[protein] + ATP = O-phospho-L-seryl-[protein] + ADP + H(+). It catalyses the reaction L-threonyl-[protein] + ATP = O-phospho-L-threonyl-[protein] + ADP + H(+). The polypeptide is Probable serine/threonine-protein kinase roco4 (roco4) (Dictyostelium discoideum (Social amoeba)).